We begin with the raw amino-acid sequence, 333 residues long: Thiamine-monophosphate kinase (333 aa).

4 residues coordinate Mg(2+): D44, S58, T59, and D60. H67 is a substrate binding site. 2 residues coordinate Mg(2+): D89 and D137. ATP contacts are provided by residues 136–137 (GD) and R162. Residue D224 participates in Mg(2+) binding. S226 serves as a coordination point for ATP. D227 contacts Mg(2+). Substrate is bound by residues E278 and W320.

This sequence belongs to the thiamine-monophosphate kinase family.

The enzyme catalyses thiamine phosphate + ATP = thiamine diphosphate + ADP. It participates in cofactor biosynthesis; thiamine diphosphate biosynthesis; thiamine diphosphate from thiamine phosphate: step 1/1. Its function is as follows. Catalyzes the ATP-dependent phosphorylation of thiamine-monophosphate (TMP) to form thiamine-pyrophosphate (TPP), the active form of vitamin B1. This Mycobacterium tuberculosis (strain CDC 1551 / Oshkosh) protein is Thiamine-monophosphate kinase.